The following is a 1558-amino-acid chain: Arginine-glutamic acid dipeptide repeats protein (1558 aa).

Residues 1–36 are compositionally biased toward basic and acidic residues; that stretch reads MTADKDKDKDKEKDRDRDRDRERDKRDKARESENAR. The tract at residues 1 to 90 is disordered; it reads MTADKDKDKD…KKKSRYERTD (90 aa). Phosphoserine is present on residues serine 53 and serine 56. Basic residues predominate over residues 74–85; it reads KSRKKPPKKKSR. In terms of domain architecture, BAH spans 103-283; the sequence is VVYRPGDCVY…PETRRLNSTQ (181 aa). Threonine 120 bears the Phosphothreonine mark. Residues serine 142 and serine 304 each carry the phosphoserine modification. The ELM2 domain occupies 284 to 387; sequence GEIRVGPSHQ…KALQRLVKKP (104 aa). Residues 391–443 enclose the SANT domain; that stretch reads LIEKCWTEDEVKRFVKGLRQYGKNFFRIRKELLPSKETGELITFYYYWKKTPE. Residues 464–495 form a disordered region; that stretch reads TRTASTPVNTPSRPPSSEFLDLSSASEDDFDS. The segment covering 465 to 474 has biased composition (polar residues); sequence RTASTPVNTP. Residues 479–488 show a composition bias toward low complexity; it reads SSEFLDLSSA. A GATA-type zinc finger spans residues 507 to 532; that stretch reads CRHCFTTTSKDWHHGGRENILLCTDC. A disordered region spans residues 542-1125; sequence LPPIEKPVDP…PSHASQSARF (584 aa). A Glycyl lysine isopeptide (Lys-Gly) (interchain with G-Cter in SUMO2) cross-link involves residue lysine 560. Threonine 593 carries the post-translational modification Phosphothreonine. 3 positions are modified to phosphoserine: serine 594, serine 600, and serine 613. Residues 609-623 show a composition bias toward low complexity; sequence SGRNSPSAASTSSND. Positions 624–640 are enriched in basic and acidic residues; the sequence is SKAETVKKSAKKVKEEA. Residue lysine 637 forms a Glycyl lysine isopeptide (Lys-Gly) (interchain with G-Cter in SUMO2) linkage. Phosphoserine occurs at positions 642, 656, 675, and 679. A compositionally biased stretch (basic and acidic residues) spans 652–673; it reads EKVASDTEDTDRITSKKTKTQE. The segment covering 688–708 has biased composition (basic and acidic residues); sequence SDSRSVNDEGSSDPKDIDQDN. Over residues 709 to 720 the composition is skewed to polar residues; that stretch reads RSTSPSIPSPQD. Low complexity predominate over residues 726–752; that stretch reads DSSAQQQMLQAQPPALQAPSGAASAPS. The segment covering 778 to 792 has biased composition (polar residues); the sequence is SPATSQPPNQTQSTV. Residues 806-823 show a composition bias toward pro residues; sequence LHPPRLPSPHPPLQPMTA. Composition is skewed to low complexity over residues 824-857, 865-874, and 891-901; these read PPSQSSAQPHPQPSLHSQGPPGPHSLQTGPLLQH, GLPSQPSQGQ, and QLPASQSALQP. Residues 902-932 are compositionally biased toward pro residues; it reads QQPPREQPLPPAPLAMPHIKPPPTTPIPQLP. The span at 962 to 972 shows a compositional bias: low complexity; the sequence is KPLSSLSTHHP. Residues 1012-1023 are compositionally biased toward polar residues; the sequence is HPTTGLHQVPSQ. Positions 1027–1053 are enriched in pro residues; sequence PQHPFVPGGPPPITPPSCPPTSTPPAG. The span at 1054–1077 shows a compositional bias: low complexity; that stretch reads PSSSSQPPCSAAVSSGGSVPGAPS. Residues serine 1098, serine 1105, and serine 1107 each carry the phosphoserine modification. The segment covering 1098-1109 has biased composition (pro residues); sequence SPPPPPRSPSPE. Phosphothreonine is present on threonine 1111. The stretch at 1148-1203 forms a coiled coil; it reads GSKLAKKREEAIEKAKREAEQKAREEREREKEKEKEREREREREREAERAAKASSS. N6-acetyllysine is present on lysine 1150. Basic and acidic residues predominate over residues 1154–1198; the sequence is KREEAIEKAKREAEQKAREEREREKEKEKEREREREREREAERAA. The interval 1154–1238 is disordered; sequence KREEAIEKAK…TTIAAVPPYI (85 aa). Tyrosine 1251 is modified (phosphotyrosine). Position 1258 is a phosphoserine (serine 1258).

As to quaternary structure, interacts with HDAC1 and ATN1. Interaction with ATN1 is improved when the poly-Gln region of ATN1 is extended. Interacts with FAT1.

It is found in the nucleus. It localises to the PML body. Plays a role as a transcriptional repressor during development. May play a role in the control of cell survival. The protein is Arginine-glutamic acid dipeptide repeats protein (Rere) of Mus musculus (Mouse).